Consider the following 678-residue polypeptide: Sulfoquinovosidase (678 aa).

Residues Gln-288, Arg-301, Val-302, and Trp-304 each coordinate a 6-sulfo-alpha-D-quinovosyldiacylglycerol. Asp-405 serves as the catalytic Nucleophile. The active site involves Glu-408. Asp-472 functions as the Proton donor in the catalytic mechanism. His-537 lines the a 6-sulfo-alpha-D-quinovosyldiacylglycerol pocket.

Belongs to the glycosyl hydrolase 31 family.

The catalysed reaction is a 6-sulfo-alpha-D-quinovosyldiacylglycerol + H2O = 6-sulfo-alpha-D-quinovose + a 1,2-diacyl-sn-glycerol. It catalyses the reaction 3-(6-sulfo-alpha-D-quinovosyl)glycerol + H2O = 6-sulfo-alpha-D-quinovose + glycerol. It participates in glycolipid metabolism. Is inactivated in vitro by the mechanism-based inactivator 5-fluoro-beta-L-idopyranosyl fluoride (5FIdoF) that yields a covalent glycosyl-enzyme complex with the active site nucleophile Asp-405. Functionally, catalyzes the hydrolysis of sulfoquinovosyl diacylglycerides (SQDG) to sulfoquinovose (SQ), which is then degraded by E.coli through the SQ Embden-Meyerhof-Parnas (SQ-EMP) sulfoglycolysis pathway as a source of carbon and sulfur. Therefore, is likely involved in the utilization of the sulfoquinovose headgroup found in ubiquitous plant sulfolipids. Is also able to hydrolyze simple sulfoquinovosides such as sulfoquinovosyl glycerol (SQGro). In vitro, can use the substrate analog para-nitrophenyl alpha-sulfoquinovoside (PNPSQ), but shows no detectable activity toward 4-nitrophenyl alpha-D-glucopyranoside (PNPGlc). Is a retaining glycoside hydrolase, since it forms the alpha anomer of SQ. Also exhibits some alpha-glucosidase activity against alpha-glucosyl fluoride in vitro, although natural substrates, such as alpha-glucobioses are scarcely hydrolyzed. This Escherichia coli (strain K12) protein is Sulfoquinovosidase.